The sequence spans 939 residues: Isoleucine--tRNA ligase (939 aa).

The 'HIGH' region motif lies at 59-69; the sequence is PYANGDIHIGH. Glutamate 570 contributes to the L-isoleucyl-5'-AMP binding site. Positions 611–615 match the 'KMSKS' region motif; that stretch reads KMSKS. Residue lysine 614 participates in ATP binding. Zn(2+) contacts are provided by cysteine 902, cysteine 905, cysteine 922, and cysteine 925.

It belongs to the class-I aminoacyl-tRNA synthetase family. IleS type 1 subfamily. Monomer. Zn(2+) is required as a cofactor.

The protein resides in the cytoplasm. It catalyses the reaction tRNA(Ile) + L-isoleucine + ATP = L-isoleucyl-tRNA(Ile) + AMP + diphosphate. Catalyzes the attachment of isoleucine to tRNA(Ile). As IleRS can inadvertently accommodate and process structurally similar amino acids such as valine, to avoid such errors it has two additional distinct tRNA(Ile)-dependent editing activities. One activity is designated as 'pretransfer' editing and involves the hydrolysis of activated Val-AMP. The other activity is designated 'posttransfer' editing and involves deacylation of mischarged Val-tRNA(Ile). This chain is Isoleucine--tRNA ligase, found in Nitrosomonas europaea (strain ATCC 19718 / CIP 103999 / KCTC 2705 / NBRC 14298).